We begin with the raw amino-acid sequence, 190 residues long: Large ribosomal subunit protein uL6 (190 aa).

The protein belongs to the universal ribosomal protein uL6 family.

This chain is Large ribosomal subunit protein uL6 (RpL9), found in Spodoptera frugiperda (Fall armyworm).